Consider the following 594-residue polypeptide: UvrABC system protein C (594 aa).

In terms of domain architecture, GIY-YIG spans 13 to 99 (SSSGVYQYFD…IKQLKPKYNI (87 aa)). The 36-residue stretch at 205–240 (DRLIKELELKMERLSSNLRFEEALIYRDRIAKIQKI) folds into the UVR domain.

This sequence belongs to the UvrC family. Interacts with UvrB in an incision complex.

It localises to the cytoplasm. Functionally, the UvrABC repair system catalyzes the recognition and processing of DNA lesions. UvrC both incises the 5' and 3' sides of the lesion. The N-terminal half is responsible for the 3' incision and the C-terminal half is responsible for the 5' incision. The sequence is that of UvrABC system protein C from Helicobacter pylori (strain J99 / ATCC 700824) (Campylobacter pylori J99).